The primary structure comprises 449 residues: uncharacterized protein (449 aa).

A compositionally biased stretch (acidic residues) spans 1–11; it reads MLDAPEQDPVD. The segment at 1 to 33 is disordered; that stretch reads MLDAPEQDPVDPGDPASPPHGEAEQPLPGPRWP. The helical transmembrane segment at 45–65 threads the bilayer; it reads LLLTALGGLLIAGLVTAIPAV. The segment at 349–449 is disordered; it reads QPPVPPPDIP…PGPAEPAPAG (101 aa). Residues 365–387 show a composition bias toward pro residues; it reads PPIPLQLPTPRPAPPAQQLPSTP. Over residues 409–418 the composition is skewed to low complexity; the sequence is HAPASAAPAE. Residues 437–449 show a composition bias toward pro residues; it reads ATPPGPAEPAPAG.

It localises to the cell membrane. It is found in the secreted. In terms of biological role, may play a role in septum formation. This is an uncharacterized protein from Mycobacterium tuberculosis (strain CDC 1551 / Oshkosh).